Here is a 61-residue protein sequence, read N- to C-terminus: Small ribosomal subunit protein uS14 (61 aa).

Zn(2+) contacts are provided by Cys24, Cys27, Cys40, and Cys43.

Belongs to the universal ribosomal protein uS14 family. Zinc-binding uS14 subfamily. In terms of assembly, part of the 30S ribosomal subunit. Contacts proteins S3 and S10. It depends on Zn(2+) as a cofactor.

Functionally, binds 16S rRNA, required for the assembly of 30S particles and may also be responsible for determining the conformation of the 16S rRNA at the A site. This Streptococcus thermophilus (strain CNRZ 1066) protein is Small ribosomal subunit protein uS14.